Consider the following 382-residue polypeptide: tRNA-specific 2-thiouridylase MnmA (382 aa).

ATP is bound by residues 18–25 and leucine 44; that span reads AMSGGVDS. Cysteine 112 acts as the Nucleophile in catalysis. Cysteine 112 and cysteine 209 are joined by a disulfide. Residue glycine 136 participates in ATP binding. Residues 159–161 are interaction with tRNA; the sequence is RDQ. Cysteine 209 (cysteine persulfide intermediate) is an active-site residue.

Belongs to the MnmA/TRMU family.

The protein localises to the cytoplasm. It catalyses the reaction S-sulfanyl-L-cysteinyl-[protein] + uridine(34) in tRNA + AH2 + ATP = 2-thiouridine(34) in tRNA + L-cysteinyl-[protein] + A + AMP + diphosphate + H(+). Functionally, catalyzes the 2-thiolation of uridine at the wobble position (U34) of tRNA, leading to the formation of s(2)U34. The polypeptide is tRNA-specific 2-thiouridylase MnmA (Methylobacterium nodulans (strain LMG 21967 / CNCM I-2342 / ORS 2060)).